An 81-amino-acid chain; its full sequence is uncharacterized protein (81 aa).

The 45-residue stretch at 1–45 (MRTTIDVAGRLVIPKRIRERLGLRGNDQVEITERDGRIEIEPAPT) folds into the SpoVT-AbrB domain.

The protein to B.subtilis SpoVT.

This is an uncharacterized protein from Mycobacterium bovis (strain ATCC BAA-935 / AF2122/97).